We begin with the raw amino-acid sequence, 429 residues long: Probable exoglucanase GH6D (429 aa).

The N-terminal stretch at 1 to 17 (MRAVYAILAGLLATGSA) is a signal peptide. The substrate site is built by Trp75 and Ser77. Residues Asp115 and Asp162 each act as proton donor in the active site. Asn206 and Trp209 together coordinate substrate. A glycan (N-linked (GlcNAc...) asparagine) is linked at Asn237. Positions 240, 300, 328, and 332 each coordinate substrate. Residues 240 to 261 (NYNPYSTNNPPPYTAGSPSADE) form a disordered region. The tract at residues 362 to 390 (PEIRADGGGGGSPAPGPSSTAVAPSPSAT) is disordered. Residues 378–390 (PSSTAVAPSPSAT) show a composition bias toward low complexity. Residues 394 to 429 (NCAARWAQCGGQGWTGPTCCAQGTCQASNQWYSQCL) form the CBM1 domain.

This sequence belongs to the glycosyl hydrolase 6 (cellulase B) family.

The protein resides in the secreted. Its function is as follows. Probable exoglucanase that may play an important function in biomass degradation by catalyzing the hydrolysis of cellulose. The polypeptide is Probable exoglucanase GH6D (Podospora anserina (strain S / ATCC MYA-4624 / DSM 980 / FGSC 10383) (Pleurage anserina)).